Here is a 152-residue protein sequence, read N- to C-terminus: Nucleoside diphosphate kinase (152 aa).

The ATP site is built by lysine 11, phenylalanine 59, arginine 87, threonine 93, arginine 104, and asparagine 114. Residue histidine 117 is the Pros-phosphohistidine intermediate of the active site.

It belongs to the NDK family. In terms of assembly, homotetramer. The cofactor is Mg(2+).

It is found in the cytoplasm. The enzyme catalyses dZDP + ATP = dZTP + ADP. The catalysed reaction is a 2'-deoxyribonucleoside 5'-diphosphate + ATP = a 2'-deoxyribonucleoside 5'-triphosphate + ADP. It carries out the reaction a ribonucleoside 5'-diphosphate + ATP = a ribonucleoside 5'-triphosphate + ADP. It functions in the pathway purine metabolism. Functionally, major role in the synthesis of nucleoside triphosphates other than ATP. The ATP gamma phosphate is transferred to the NDP beta phosphate via a ping-pong mechanism, using a phosphorylated active-site intermediate. Its function is as follows. (Microbial infection) Catalyzes the phosphorylation of dZDP to dZTP, when the bacterium is infected by a phage that produces the substrate for the synthesis of dZTP (2- amino-2'-deoxyadenosine 5'-triphosphate), which is then used by the phage as a DNA polymerase substrate. The chain is Nucleoside diphosphate kinase from Synechococcus sp. (strain WH7803).